Here is a 360-residue protein sequence, read N- to C-terminus: Vignain (360 aa).

Positions 1–20 (MQKFILLALSLALVLAITES) are cleaved as a signal peptide. The propeptide at 21–124 (FDFHEKELES…NGTFMYEKVD (104 aa)) is activation peptide. An N-linked (GlcNAc...) asparagine glycan is attached at N115. Cystine bridges form between C147-C189, C181-C222, and C280-C332. The active site involves C150. Catalysis depends on residues H286 and N307. The tract at residues 341-360 (PIKKSSNNPSGIKSSPKDEL) is disordered. Polar residues predominate over residues 344–353 (KSSNNPSGIK). A propeptide spans 354-360 (SSPKDEL) (removed in mature form). The prevents secretion from ER stretch occupies residues 357-360 (KDEL).

The protein belongs to the peptidase C1 family. In terms of processing, the potential N-glycosylation site at Asn-115 is not glycosylated.

It localises to the cytoplasmic vesicle. Its activity is regulated as follows. Low pH triggers activation of the protease and removal of the propeptide and the KDEL motif. Involved in programmed cell death. Shows a pronounced preference for hydrophobic residues in the P2 position and no obvious preference in the P1 position of the cleavage site. Accepts proline at the P1 and P1' positions. The polypeptide is Vignain (CYSEP) (Ricinus communis (Castor bean)).